The sequence spans 165 residues: Cyclic pyranopterin monophosphate synthase (165 aa).

Substrate contacts are provided by residues 83 to 85 (FCH) and 120 to 121 (ME). Aspartate 135 is an active-site residue.

The protein belongs to the MoaC family. In terms of assembly, homohexamer; trimer of dimers.

The enzyme catalyses (8S)-3',8-cyclo-7,8-dihydroguanosine 5'-triphosphate = cyclic pyranopterin phosphate + diphosphate. It functions in the pathway cofactor biosynthesis; molybdopterin biosynthesis. Functionally, catalyzes the conversion of (8S)-3',8-cyclo-7,8-dihydroguanosine 5'-triphosphate to cyclic pyranopterin monophosphate (cPMP). The sequence is that of Cyclic pyranopterin monophosphate synthase from Xanthomonas campestris pv. campestris (strain B100).